Here is a 200-residue protein sequence, read N- to C-terminus: MALWMRLLPLLALLALWGPDPAAAFVNQHLCGSHLVEALYLVCGERGFFYTPKTRREAEDLQASALSLSSSTSTWPEGLDATARAPPALVVTANIGQAGGSSSRQFRQRALGTSDSPVLFIHCPGAAGTAQGLEYRGRRVTTELVWEEVDSSPQPQGSESLPAQPPAQPAPQPEPQQAREPSPEVSCCGLWPRRPQRSQN.

Residues 148–200 (EVDSSPQPQGSESLPAQPPAQPAPQPEPQQAREPSPEVSCCGLWPRRPQRSQN) form a disordered region. The span at 163–174 (AQPPAQPAPQPE) shows a compositional bias: pro residues. Residues 175–184 (PQQAREPSPE) show a composition bias toward low complexity.

As to expression, expressed in pancreas, eye and, to a lower extent, in limb.

This Homo sapiens (Human) protein is Insulin, isoform 2 (INS-IGF2).